Consider the following 283-residue polypeptide: Putative S-adenosyl-L-methionine-dependent methyltransferase SAV_474/SAV474 (283 aa).

Residues aspartate 121 and 150–151 (DL) each bind S-adenosyl-L-methionine. The interval 258-283 (AAYGRPISTPPQREERPGGLISAVRR) is disordered.

The protein belongs to the UPF0677 family.

Its function is as follows. Exhibits S-adenosyl-L-methionine-dependent methyltransferase activity. This Streptomyces avermitilis (strain ATCC 31267 / DSM 46492 / JCM 5070 / NBRC 14893 / NCIMB 12804 / NRRL 8165 / MA-4680) protein is Putative S-adenosyl-L-methionine-dependent methyltransferase SAV_474/SAV474.